A 442-amino-acid chain; its full sequence is Methionine aminopeptidase 2 (442 aa).

The interval 1–81 is disordered; the sequence is MAAQAPTEAL…APTAQSDPPR (81 aa). The segment covering 56–72 has biased composition (basic residues); it reads PLRRRRRRRRTRKKKKA. Histidine 196 is a binding site for substrate. A divalent metal cation is bound by residues aspartate 216, aspartate 227, and histidine 296. Histidine 304 is a binding site for substrate. The a divalent metal cation site is built by glutamate 329 and glutamate 423.

Belongs to the peptidase M24A family. Methionine aminopeptidase eukaryotic type 2 subfamily. It depends on Co(2+) as a cofactor. Zn(2+) serves as cofactor. The cofactor is Mn(2+). Requires Fe(2+) as cofactor.

Its subcellular location is the cytoplasm. It catalyses the reaction Release of N-terminal amino acids, preferentially methionine, from peptides and arylamides.. Functionally, cotranslationally removes the N-terminal methionine from nascent proteins. The N-terminal methionine is often cleaved when the second residue in the primary sequence is small and uncharged (Met-Ala-, Cys, Gly, Pro, Ser, Thr, or Val). The chain is Methionine aminopeptidase 2 from Verticillium alfalfae (strain VaMs.102 / ATCC MYA-4576 / FGSC 10136) (Verticillium wilt of alfalfa).